The primary structure comprises 188 residues: Protein SSX5 (188 aa).

A KRAB-related domain is found at 20 to 83; the sequence is KMQKAFDDIA…KRVADFQGND (64 aa). The tract at residues 78-188 is disordered; it reads DFQGNDFDND…EISDPQEDDE (111 aa). Residues 112-122 show a composition bias toward basic and acidic residues; that stretch reads TPEKPAEEGND. Polar residues predominate over residues 144-155; it reads KLNTSEKVNKTS. Positions 156–170 are enriched in basic residues; the sequence is GPKRGKHAWTHRVRE. A compositionally biased stretch (acidic residues) spans 179–188; that stretch reads EISDPQEDDE.

Belongs to the SSX family.

Could act as a modulator of transcription. This is Protein SSX5 (SSX5) from Homo sapiens (Human).